A 227-amino-acid chain; its full sequence is Ras-related protein Rab-3C (227 aa).

The GTP site is built by Ser-39, Gly-42, Lys-43, Thr-44, Ser-45, Thr-56, Ser-57, Ser-61, and Thr-62. Thr-44 contributes to the Mg(2+) binding site. The Switch 1 signature appears at 53–66; the sequence is DSFTSAFVSTVGID. 2 residues coordinate Mg(2+): Thr-62 and Asp-85. Thr-86 carries the phosphothreonine modification. The short motif at 86 to 104 is the Switch 2 element; that stretch reads TAGQERYRTITTAYYRGAM. Residues Gly-88, Asn-143, Lys-144, Asp-146, Ala-174, and Lys-175 each contribute to the GTP site. 2 positions are modified to phosphoserine: Ser-196 and Ser-198. At Thr-206 the chain carries Phosphothreonine. Residues Cys-225 and Cys-227 are each lipidated (S-geranylgeranyl cysteine). Position 227 is a cysteine methyl ester (Cys-227).

This sequence belongs to the small GTPase superfamily. Rab family. As to quaternary structure, interacts with RIMS1, RIMS2, RPH3A and RPH3AL. The GTP-bound form interacts with REP15. Interacts with GDI2, CHM and CHML; phosphorylation at Thr-86 disrupts these interactions. Interacts with MADD (via uDENN domain); the GTP-bound form is preferred for interaction. The cofactor is Mg(2+). In terms of processing, phosphorylation of Thr-86 in the switch II region by LRRK2 prevents the association of RAB regulatory proteins, including CHM, CHML and RAB GDP dissociation inhibitor GDI2.

The protein resides in the cell membrane. It catalyses the reaction GTP + H2O = GDP + phosphate + H(+). Regulated by guanine nucleotide exchange factors (GEFs) which promote the exchange of bound GDP for free GTP. Regulated by GTPase activating proteins (GAPs) which increase the GTP hydrolysis activity. Inhibited by GDP dissociation inhibitors (GDIs) which prevent Rab-GDP dissociation. Functionally, the small GTPases Rab are key regulators of intracellular membrane trafficking, from the formation of transport vesicles to their fusion with membranes. Rabs cycle between an inactive GDP-bound form and an active GTP-bound form that is able to recruit to membranes different sets of downstream effectors directly responsible for vesicle formation, movement, tethering and fusion. This is Ras-related protein Rab-3C (RAB3C) from Bos taurus (Bovine).